Reading from the N-terminus, the 70-residue chain is Turripeptide Lol9.1 (70 aa).

The first 20 residues, 1–20, serve as a signal peptide directing secretion; sequence MKVYCLLLVLLVGLVSQAHG. The Kazal-like domain maps to 21–70; it reads KPTKRCLSVCSAEYEPVCGSDGKTYANKCHLMTEACWSPTSITLVHEGKC. 3 disulfides stabilise this stretch: cysteine 26/cysteine 56, cysteine 30/cysteine 49, and cysteine 38/cysteine 70.

The protein belongs to the conopeptide P-like superfamily. As to expression, expressed by the venom duct.

The protein resides in the secreted. Functionally, acts as a neurotoxin by inhibiting an ion channel. May also act as a serine protease inhibitor, since it possess the kazal serine protease inhibitor signature. The polypeptide is Turripeptide Lol9.1 (Iotyrris olangoensis (Sea snail)).